Consider the following 306-residue polypeptide: tRNA dimethylallyltransferase (306 aa).

Residue Gly13–Thr20 participates in ATP binding. Thr15–Thr20 contributes to the substrate binding site. 2 interaction with substrate tRNA regions span residues Asp38–Gln41 and Gln161–Arg165.

The protein belongs to the IPP transferase family. Monomer. It depends on Mg(2+) as a cofactor.

The enzyme catalyses adenosine(37) in tRNA + dimethylallyl diphosphate = N(6)-dimethylallyladenosine(37) in tRNA + diphosphate. Its function is as follows. Catalyzes the transfer of a dimethylallyl group onto the adenine at position 37 in tRNAs that read codons beginning with uridine, leading to the formation of N6-(dimethylallyl)adenosine (i(6)A). In Maridesulfovibrio salexigens (strain ATCC 14822 / DSM 2638 / NCIMB 8403 / VKM B-1763) (Desulfovibrio salexigens), this protein is tRNA dimethylallyltransferase.